The chain runs to 536 residues: CUGBP Elav-like family member 2 (536 aa).

3 RRM domains span residues 58–141 (IKMF…PADS), 150–230 (RKLF…FADT), and 451–529 (ANLF…LKRS).

It belongs to the CELF/BRUNOL family.

The protein resides in the nucleus. Its subcellular location is the cytoplasm. Its function is as follows. RNA-binding protein implicated in the regulation of several post-transcriptional events. May be involved in pre-mRNA alternative splicing, mRNA translation repression and stability. The protein is CUGBP Elav-like family member 2 (celf2) of Xenopus laevis (African clawed frog).